We begin with the raw amino-acid sequence, 265 residues long: GTP cyclohydrolase 1 type 2 homolog (265 aa).

A divalent metal cation-binding residues include His-65, Asp-103, His-225, and Glu-228.

This sequence belongs to the GTP cyclohydrolase I type 2/NIF3 family. In terms of assembly, homohexamer.

The polypeptide is GTP cyclohydrolase 1 type 2 homolog (Streptococcus pneumoniae serotype 4 (strain ATCC BAA-334 / TIGR4)).